The following is a 195-amino-acid chain: Peptidyl-tRNA hydrolase (195 aa).

Y17 is a tRNA binding site. H22 (proton acceptor) is an active-site residue. TRNA contacts are provided by F68, N70, and N116.

The protein belongs to the PTH family. As to quaternary structure, monomer.

It is found in the cytoplasm. The enzyme catalyses an N-acyl-L-alpha-aminoacyl-tRNA + H2O = an N-acyl-L-amino acid + a tRNA + H(+). Functionally, hydrolyzes ribosome-free peptidyl-tRNAs (with 1 or more amino acids incorporated), which drop off the ribosome during protein synthesis, or as a result of ribosome stalling. In terms of biological role, catalyzes the release of premature peptidyl moieties from peptidyl-tRNA molecules trapped in stalled 50S ribosomal subunits, and thus maintains levels of free tRNAs and 50S ribosomes. The chain is Peptidyl-tRNA hydrolase from Shewanella denitrificans (strain OS217 / ATCC BAA-1090 / DSM 15013).